A 145-amino-acid chain; its full sequence is Deoxyuridine 5'-triphosphate nucleotidohydrolase (145 aa).

Residues 65-67, N78, and 82-84 each bind substrate; these read RSG and TID.

Belongs to the dUTPase family. Mg(2+) is required as a cofactor.

It catalyses the reaction dUTP + H2O = dUMP + diphosphate + H(+). It functions in the pathway pyrimidine metabolism; dUMP biosynthesis; dUMP from dCTP (dUTP route): step 2/2. In terms of biological role, this enzyme is involved in nucleotide metabolism: it produces dUMP, the immediate precursor of thymidine nucleotides and it decreases the intracellular concentration of dUTP so that uracil cannot be incorporated into DNA. In Clostridium tetani (strain Massachusetts / E88), this protein is Deoxyuridine 5'-triphosphate nucleotidohydrolase.